A 329-amino-acid chain; its full sequence is Deoxynucleotidyltransferase terminal-interacting protein 1 (329 aa).

2 disordered regions span residues Met1–Glu22 and Lys147–Ser178. The interval Met56–Lys147 is important for dimerization. Positions Lys147 to His158 are enriched in basic and acidic residues. The a.T hook DNA-binding region spans Arg159 to Gly173. Ser161 carries the phosphoserine modification. The Nuclear localization signal signature appears at Pro164 to Arg170. Residues Arg197–Thr316 form an important for DNA and nucleosome binding region. The H-T-H motif DNA-binding region spans Gly216–Pro237.

As to quaternary structure, monomer and homodimer. A minor proportion may form homotrimers. Interacts with ZNF541. Interacts with the terminal deoxynucleotidyltransferase DNTT. Interacts with TRERF1. Identified in a histone deacetylase complex that contains DNTTIP1, HDAC1 and MIDEAS; this complex assembles into a tetramer that contains four copies of each protein chain. Component of a histone deacetylase complex containing DNTTIP1, ZNF541, HDAC1 and HDAC2. Identified in a complex with KCTD19, HDAC1, HDAC2 and ZNF541.

It localises to the nucleus. Increases DNTT terminal deoxynucleotidyltransferase activity (in vitro). Also acts as a transcriptional regulator, binding to the consensus sequence 5'-GNTGCATG-3' following an AT-tract. Associates with RAB20 promoter and positively regulates its transcription. Binds DNA and nucleosomes; may recruit HDAC1 complexes to nucleosomes or naked DNA. The chain is Deoxynucleotidyltransferase terminal-interacting protein 1 (DNTTIP1) from Homo sapiens (Human).